A 395-amino-acid polypeptide reads, in one-letter code: Major outer membrane protein P.IA (395 aa).

The first 19 residues, 1 to 19 (MRKKLTALVLSALPLAAVA), serve as a signal peptide directing secretion.

It belongs to the Gram-negative porin family. As to quaternary structure, homotrimer.

The protein localises to the cell outer membrane. In terms of biological role, serves as a slightly cation selective porin. Major antigen on the gonococcal cell surface and it may have pathogenic properties in addition to its porin activity. In Neisseria meningitidis serogroup A / serotype 4A (strain DSM 15465 / Z2491), this protein is Major outer membrane protein P.IA (porA).